A 784-amino-acid polypeptide reads, in one-letter code: Toll-like receptor 2 (784 aa).

An N-terminal signal peptide occupies residues 1-20 (MPHTLWMVWVLGVIISLSKE). Residues 21–588 (ESSNQASLSC…RLSVSECHRT (568 aa)) lie on the Extracellular side of the membrane. Cys30 and Cys36 are joined by a disulfide. 19 LRR repeats span residues 54-77 (VKSLDLSNNRITYISNSDLQRCVN), 78-101 (LQALVLTSNGINTIEEDSFSSLGS), 102-125 (LEHLDLSYNYLSNLSSSWFKPLSS), 126-150 (LTFLNLLGNPYKTLGETSLFSHLTK), 151-175 (LQILRVGNMDTFTKIQRKDFAGLTF), 176-199 (LEELEIDASDLQSYEPKSLKSIQN), 200-223 (VSHLILHMKQHILLLEIFVDVTSS), 224-250 (VECLELRDTDLDTFHFSELSTGETNSL), 251-278 (IKKFTFRNVKITDESLFQVMKLLNQISG), 279-308 (LLELEFDDCTLNGVGNFRASDNDRVIDPGK), 309-337 (VETLTIRRLHIPRFYLFYDLSTLYSLTER), 338-361 (VKRITVENSKVFLVPCLLSQHLKS), 362-388 (LEYLDLSENLMVEEYLKNSACEDAWPS), 389-414 (LQTLILRQNHLASLEKTGETLLTLKN), 415-437 (LTNIDISKNSFHSMPETCQWPEK), 438-457 (MKYLNLSSTRIHSVTGCIPK), 458-478 (TLEILDVSNNNLNLFSLNLPQ), 479-500 (LKELYISRNKLMTLPDASLLPM), and 501-524 (LLVLKISRNAITTFSKEQLDSFHT). A glycan (N-linked (GlcNAc...) asparagine) is linked at Asn114. N-linked (GlcNAc...) asparagine glycosylation is present at Asn199. Cys353 and Cys382 are joined by a disulfide. Asn414 carries N-linked (GlcNAc...) asparagine glycosylation. A disulfide bridge links Cys432 with Cys454. An N-linked (GlcNAc...) asparagine glycan is attached at Asn442. In terms of domain architecture, LRRCT spans 525–579 (LKTLEAGGNNFICSCEFLSFTQEQQALAKVLIDWPANYLCDSPSHVRGQQVQDVR). Residues 589–609 (ALVSGMCCALFLLILLTGVLC) form a helical membrane-spanning segment. Residues 610-784 (HRFHGLWYMK…WVNLRAAIKS (175 aa)) lie on the Cytoplasmic side of the membrane. The TIR domain maps to 639 to 782 (ICYDAFVSYS…GFWVNLRAAI (144 aa)). Lys754 participates in a covalent cross-link: Glycyl lysine isopeptide (Lys-Gly) (interchain with G-Cter in ubiquitin). The short motif at 761–778 (YLEWPMDEAQREGFWVNL) is the ATG16L1-binding motif element.

Belongs to the Toll-like receptor family. In terms of assembly, interacts with LY96, TLR1 and TLR6 (via extracellular domain). TLR2 seems to exist in heterodimers with either TLR1 or TLR6 before stimulation by the ligand. The heterodimers form bigger oligomers in response to their corresponding ligands as well as further heterotypic associations with other receptors such as CD14 and/or CD36. Binds MYD88 (via TIR domain). Interacts with TICAM1. Interacts with CNPY3. Interacts with ATG16L1. Interacts with PPP1R11. Interacts with TICAM2. Interacts with TIRAP. (Microbial infection) Interacts with M.tuberculosis EsxA. As to quaternary structure, (Microbial infection) Interacts with M.bovis MPB83. In terms of assembly, (Microbial infection) Interacts with Staphylococcus aureus protein SSL5. Post-translationally, glycosylation of Asn-442 is critical for secretion of the N-terminal ectodomain of TLR2. Ubiquitinated at Lys-754 by PPP1R11, leading to its degradation. Deubiquitinated by USP2. In terms of tissue distribution, highly expressed in peripheral blood leukocytes, in particular in monocytes, in bone marrow, lymph node and in spleen. Also detected in lung and in fetal liver. Levels are low in other tissues.

It is found in the membrane. The protein localises to the cytoplasmic vesicle. Its subcellular location is the phagosome membrane. It localises to the membrane raft. Its function is as follows. Cooperates with LY96 to mediate the innate immune response to bacterial lipoproteins and other microbial cell wall components. Cooperates with TLR1 or TLR6 to mediate the innate immune response to bacterial lipoproteins or lipopeptides. Acts via MYD88 and TRAF6, leading to NF-kappa-B activation, cytokine secretion and the inflammatory response. May also activate immune cells and promote apoptosis in response to the lipid moiety of lipoproteins. Recognizes mycoplasmal macrophage-activating lipopeptide-2kD (MALP-2), soluble tuberculosis factor (STF), phenol-soluble modulin (PSM) and B.burgdorferi outer surface protein A lipoprotein (OspA-L) cooperatively with TLR6. Stimulation of monocytes in vitro with M.tuberculosis PstS1 induces p38 MAPK and ERK1/2 activation primarily via this receptor, but also partially via TLR4. MAPK activation in response to bacterial peptidoglycan also occurs via this receptor. Acts as a receptor for M.tuberculosis lipoproteins LprA, LprG, LpqH and PstS1, some lipoproteins are dependent on other coreceptors (TLR1, CD14 and/or CD36); the lipoproteins act as agonists to modulate antigen presenting cell functions in response to the pathogen. M.tuberculosis HSP70 (dnaK) but not HSP65 (groEL-2) acts via this protein to stimulate NF-kappa-B expression. Recognizes M.tuberculosis major T-antigen EsxA (ESAT-6) which inhibits downstream MYD88-dependent signaling (shown in mouse). Forms activation clusters composed of several receptors depending on the ligand, these clusters trigger signaling from the cell surface and subsequently are targeted to the Golgi in a lipid-raft dependent pathway. Forms the cluster TLR2:TLR6:CD14:CD36 in response to diacylated lipopeptides and TLR2:TLR1:CD14 in response to triacylated lipopeptides. Required for normal uptake of M.tuberculosis, a process that is inhibited by M.tuberculosis LppM. This is Toll-like receptor 2 from Homo sapiens (Human).